We begin with the raw amino-acid sequence, 48 residues long: Sperm protamine P1 (48 aa).

It belongs to the protamine P1 family. As to expression, testis.

The protein resides in the nucleus. Its subcellular location is the chromosome. In terms of biological role, protamines substitute for histones in the chromatin of sperm during the haploid phase of spermatogenesis. They compact sperm DNA into a highly condensed, stable and inactive complex. The sequence is that of Sperm protamine P1 (PRM1) from Murina cyclotis (Round-eared tube-nosed bat).